The primary structure comprises 256 residues: Ribonuclease T2 (256 aa).

An N-terminal signal peptide occupies residues 1–24 (MRPAALRGALLGCLCLALLCLGGA). A disulfide bond links C48 and C55. The active site involves H65. 3 cysteine pairs are disulfide-bonded: C75-C121, C184-C241, and C202-C213. Residues N76 and N106 are each glycosylated (N-linked (GlcNAc...) asparagine). Residues E114 and H118 contribute to the active site. The N-linked (GlcNAc...) asparagine glycan is linked to N212.

The protein belongs to the RNase T2 family. In terms of tissue distribution, ubiquitous. Higher expression levels observed in the temporal lobe and fetal brain.

The protein localises to the secreted. Its subcellular location is the lysosome lumen. It is found in the endoplasmic reticulum lumen. It localises to the mitochondrion intermembrane space. It catalyses the reaction a ribonucleotidyl-ribonucleotide-RNA + H2O = a 3'-end 3'-phospho-ribonucleotide-RNA + a 5'-end dephospho-ribonucleoside-RNA + H(+). The enzyme catalyses an adenylyl-uridine-RNA = a 3'-end 2',3'-cyclophospho-AMP-RNA + a 5'-end dephospho-uridine-RNA. It carries out the reaction a guanylyl-uridine-RNA = a 3'-end 2',3'-cyclophospho-GMP-RNA + a 5'-end dephospho-uridine-RNA. With respect to regulation, inhibited by Zn(2+) and Cu(2+). In terms of biological role, ribonuclease that plays an essential role in innate immune response by recognizing and degrading RNAs from microbial pathogens that are subsequently sensed by TLR8. Cleaves preferentially single-stranded RNA molecules between purine and uridine residues, which critically contributes to the supply of catabolic uridine and the generation of purine-2',3'-cyclophosphate-terminated oligoribonucleotides. In turn, RNase T2 degradation products promote the RNA-dependent activation of TLR8. In plasmacytoid dendritic cells, it cooperates with PLD3 or PLD4 5'-&gt;3' exonucleases to process RNA fragments and release 2',3'-cyclic guanosine monophosphate (2',3'-cGMP), a potent stimulatory ligand for TLR7. Also plays a key role in degradation of mitochondrial RNA and processing of non-coding RNA imported from the cytosol into mitochondria. Participates as well in degradation of mitochondrion-associated cytosolic rRNAs. The chain is Ribonuclease T2 (RNASET2) from Homo sapiens (Human).